Here is a 692-residue protein sequence, read N- to C-terminus: Elongation factor G (692 aa).

The 276-residue stretch at 8–283 (NRIRNIGIAA…AVIDYLPAPT (276 aa)) folds into the tr-type G domain. Residues 17-24 (AHIDAGKT), 81-85 (DTPGH), and 135-138 (NKMD) each bind GTP.

This sequence belongs to the TRAFAC class translation factor GTPase superfamily. Classic translation factor GTPase family. EF-G/EF-2 subfamily.

The protein resides in the cytoplasm. Catalyzes the GTP-dependent ribosomal translocation step during translation elongation. During this step, the ribosome changes from the pre-translocational (PRE) to the post-translocational (POST) state as the newly formed A-site-bound peptidyl-tRNA and P-site-bound deacylated tRNA move to the P and E sites, respectively. Catalyzes the coordinated movement of the two tRNA molecules, the mRNA and conformational changes in the ribosome. The polypeptide is Elongation factor G (Helicobacter pylori (strain HPAG1)).